Here is a 293-residue protein sequence, read N- to C-terminus: Formamidopyrimidine-DNA glycosylase (293 aa).

The Schiff-base intermediate with DNA role is filled by proline 2. Catalysis depends on glutamate 3, which acts as the Proton donor. Lysine 60 acts as the Proton donor; for beta-elimination activity in catalysis. 3 residues coordinate DNA: histidine 110, arginine 129, and arginine 174. The FPG-type zinc finger occupies 259-293 (NVYRRTGKECRKCGNLIEKQKIAGRSTHWCPNCQK). The Proton donor; for delta-elimination activity role is filled by arginine 283.

It belongs to the FPG family. As to quaternary structure, monomer. Zn(2+) serves as cofactor.

The catalysed reaction is Hydrolysis of DNA containing ring-opened 7-methylguanine residues, releasing 2,6-diamino-4-hydroxy-5-(N-methyl)formamidopyrimidine.. It carries out the reaction 2'-deoxyribonucleotide-(2'-deoxyribose 5'-phosphate)-2'-deoxyribonucleotide-DNA = a 3'-end 2'-deoxyribonucleotide-(2,3-dehydro-2,3-deoxyribose 5'-phosphate)-DNA + a 5'-end 5'-phospho-2'-deoxyribonucleoside-DNA + H(+). Involved in base excision repair of DNA damaged by oxidation or by mutagenic agents. Acts as a DNA glycosylase that recognizes and removes damaged bases. Has a preference for oxidized purines, such as 7,8-dihydro-8-oxoguanine (8-oxoG). Has AP (apurinic/apyrimidinic) lyase activity and introduces nicks in the DNA strand. Cleaves the DNA backbone by beta-delta elimination to generate a single-strand break at the site of the removed base with both 3'- and 5'-phosphates. In Prochlorococcus marinus (strain MIT 9312), this protein is Formamidopyrimidine-DNA glycosylase.